The following is a 117-amino-acid chain: Large ribosomal subunit protein bL20c (117 aa).

Belongs to the bacterial ribosomal protein bL20 family.

It localises to the plastid. Its subcellular location is the chloroplast. In terms of biological role, binds directly to 23S ribosomal RNA and is necessary for the in vitro assembly process of the 50S ribosomal subunit. It is not involved in the protein synthesizing functions of that subunit. In Morus indica (Mulberry), this protein is Large ribosomal subunit protein bL20c.